The following is a 350-amino-acid chain: Protein RecA (350 aa).

An ATP-binding site is contributed by 65-72; the sequence is GPESSGKT. Positions 326 to 350 are disordered; it reads HNLKTRNTADSKVTGAKDEKSKEEK. The segment covering 340–350 has biased composition (basic and acidic residues); the sequence is GAKDEKSKEEK.

Belongs to the RecA family.

The protein localises to the cytoplasm. In terms of biological role, can catalyze the hydrolysis of ATP in the presence of single-stranded DNA, the ATP-dependent uptake of single-stranded DNA by duplex DNA, and the ATP-dependent hybridization of homologous single-stranded DNAs. It interacts with LexA causing its activation and leading to its autocatalytic cleavage. The protein is Protein RecA of Clostridium novyi (strain NT).